Consider the following 199-residue polypeptide: Recombination protein RecR (199 aa).

The segment at 58-73 (CQRCNNFSEEAVCQRC) adopts a C4-type zinc-finger fold. The Toprim domain occupies 81 to 176 (ATLCVVEMPA…KVSRISRGVP (96 aa)).

Belongs to the RecR family.

Functionally, may play a role in DNA repair. It seems to be involved in an RecBC-independent recombinational process of DNA repair. It may act with RecF and RecO. The sequence is that of Recombination protein RecR from Azoarcus sp. (strain BH72).